Consider the following 168-residue polypeptide: 2-C-methyl-D-erythritol 2,4-cyclodiphosphate synthase (168 aa).

2 residues coordinate a divalent metal cation: Asp-11 and His-13. Residues 11 to 13 (DVH) and 41 to 42 (HS) contribute to the 4-CDP-2-C-methyl-D-erythritol 2-phosphate site. An a divalent metal cation-binding site is contributed by His-49. Residues 63-65 (DIG), 68-72 (FPDTD), 139-142 (TTTE), Phe-146, and Arg-149 contribute to the 4-CDP-2-C-methyl-D-erythritol 2-phosphate site.

This sequence belongs to the IspF family. In terms of assembly, homotrimer. Requires a divalent metal cation as cofactor.

It carries out the reaction 4-CDP-2-C-methyl-D-erythritol 2-phosphate = 2-C-methyl-D-erythritol 2,4-cyclic diphosphate + CMP. The protein operates within isoprenoid biosynthesis; isopentenyl diphosphate biosynthesis via DXP pathway; isopentenyl diphosphate from 1-deoxy-D-xylulose 5-phosphate: step 4/6. Involved in the biosynthesis of isopentenyl diphosphate (IPP) and dimethylallyl diphosphate (DMAPP), two major building blocks of isoprenoid compounds. Catalyzes the conversion of 4-diphosphocytidyl-2-C-methyl-D-erythritol 2-phosphate (CDP-ME2P) to 2-C-methyl-D-erythritol 2,4-cyclodiphosphate (ME-CPP) with a corresponding release of cytidine 5-monophosphate (CMP). The polypeptide is 2-C-methyl-D-erythritol 2,4-cyclodiphosphate synthase (Psychrobacter arcticus (strain DSM 17307 / VKM B-2377 / 273-4)).